Reading from the N-terminus, the 408-residue chain is Protein trichome birefringence-like 14 (408 aa).

Residues 11–31 (GSVSLALIVLILLVIILLVSE) traverse the membrane as a helical; Signal-anchor for type II membrane protein segment. A GDS motif motif is present at residues 131–133 (GDS). Positions 387 to 401 (DCLHWCLPGIPDTWN) match the DCXHWCLPGXXDXWN motif motif.

The protein belongs to the PC-esterase family. TBL subfamily.

It localises to the membrane. In terms of biological role, may act as a bridging protein that binds pectin and other cell wall polysaccharides. Probably involved in maintaining esterification of pectins. May be involved in the specific O-acetylation of cell wall polymers. The protein is Protein trichome birefringence-like 14 (TBL14) of Arabidopsis thaliana (Mouse-ear cress).